The sequence spans 65 residues: Large ribosomal subunit protein bL35 (65 aa).

A disordered region spans residues 1–65 (MQKIKTNRSA…KELKRLLPGM (65 aa)). 2 stretches are compositionally biased toward basic residues: residues 10–19 (AAKRFKRTKS) and 33–47 (LTKKNRKRKRSLRKS). The segment covering 54–65 (NNKELKRLLPGM) has biased composition (basic and acidic residues).

This sequence belongs to the bacterial ribosomal protein bL35 family.

This Desulfosudis oleivorans (strain DSM 6200 / JCM 39069 / Hxd3) (Desulfococcus oleovorans) protein is Large ribosomal subunit protein bL35.